The chain runs to 179 residues: MTLASAEKEMAGVLTFFQKETRGFKTGKAHPALVETVTIEVYGTTMRLSDIASISVSDMRQLLISPYDAGTVSAISKGILAANLNLQPIVEGATVRINVPEPTEEYRREVIKQLKRKSEEAKVAIRNIRRTFNDRLKKDDSLTEDAVKSLEKKIQELTDKFCKQIEELAKQKEAELATV.

Belongs to the RRF family.

The protein resides in the cytoplasm. Its function is as follows. Responsible for the release of ribosomes from messenger RNA at the termination of protein biosynthesis. May increase the efficiency of translation by recycling ribosomes from one round of translation to another. The protein is Ribosome-recycling factor of Chlamydia trachomatis serovar A (strain ATCC VR-571B / DSM 19440 / HAR-13).